Consider the following 149-residue polypeptide: Transcriptional repressor NrdR (149 aa).

A zinc finger lies at 3–34 (CPFCSATDTKVIDSRLVADGHQVRRRRECAEC). In terms of domain architecture, ATP-cone spans 49–139 (PRVVKQDGSR…VYRAFEDVSE (91 aa)).

It belongs to the NrdR family. It depends on Zn(2+) as a cofactor.

Functionally, negatively regulates transcription of bacterial ribonucleotide reductase nrd genes and operons by binding to NrdR-boxes. The polypeptide is Transcriptional repressor NrdR (Shewanella sediminis (strain HAW-EB3)).